The chain runs to 93 residues: Small ribosomal subunit protein uS19 (93 aa).

Belongs to the universal ribosomal protein uS19 family.

Its function is as follows. Protein S19 forms a complex with S13 that binds strongly to the 16S ribosomal RNA. This Geotalea uraniireducens (strain Rf4) (Geobacter uraniireducens) protein is Small ribosomal subunit protein uS19.